The following is a 381-amino-acid chain: MTTSTGKINLLGLTQPEMEQFFDSIGEKRFRAGQVMKWIHHFGVSDFAAMTNVGKVLREKLEAVAEIRPPEVVSEDISADGTRKWVIRVASGSCVETVYIPTDDRGTLCVSSQAGCALDCSFCSTGKQGFNSNLTAAEVIGQVWLANKSFGTVPAKVDRAITNVVMMGMGEPLLNFDNVIAAMKIMMDDLGYGISKRRVTLSTSGVVPMIDELAKHIDVSLALSLHAPNDELRNKLVPINKKYPLKVLLESCMGYMSTLGGKRVLTVEYTLLKDVNDQPEHAAQMIELLRDVPCKINLIPFNPFPHSGYERPSNNAIRRFQDLLHHGGFNVTTRTTRGDDIDAACGQLVGQVNDRTRRSERYIAVRQLSADVELPDSAASH.

The active-site Proton acceptor is glutamate 96. The Radical SAM core domain maps to 102 to 342; it reads TDDRGTLCVS…TRTTRGDDID (241 aa). Residues cysteine 109 and cysteine 345 are joined by a disulfide bond. [4Fe-4S] cluster-binding residues include cysteine 116, cysteine 120, and cysteine 123. S-adenosyl-L-methionine contacts are provided by residues 170-171, serine 202, 224-226, and asparagine 302; these read GE and SLH. Cysteine 345 functions as the S-methylcysteine intermediate in the catalytic mechanism.

This sequence belongs to the radical SAM superfamily. RlmN family. [4Fe-4S] cluster serves as cofactor.

It localises to the cytoplasm. It catalyses the reaction adenosine(2503) in 23S rRNA + 2 reduced [2Fe-2S]-[ferredoxin] + 2 S-adenosyl-L-methionine = 2-methyladenosine(2503) in 23S rRNA + 5'-deoxyadenosine + L-methionine + 2 oxidized [2Fe-2S]-[ferredoxin] + S-adenosyl-L-homocysteine. The enzyme catalyses adenosine(37) in tRNA + 2 reduced [2Fe-2S]-[ferredoxin] + 2 S-adenosyl-L-methionine = 2-methyladenosine(37) in tRNA + 5'-deoxyadenosine + L-methionine + 2 oxidized [2Fe-2S]-[ferredoxin] + S-adenosyl-L-homocysteine. Its function is as follows. Specifically methylates position 2 of adenine 2503 in 23S rRNA and position 2 of adenine 37 in tRNAs. m2A2503 modification seems to play a crucial role in the proofreading step occurring at the peptidyl transferase center and thus would serve to optimize ribosomal fidelity. The sequence is that of Dual-specificity RNA methyltransferase RlmN from Pseudomonas putida (strain ATCC 700007 / DSM 6899 / JCM 31910 / BCRC 17059 / LMG 24140 / F1).